The following is a 156-amino-acid chain: Cyanate hydratase (156 aa).

Catalysis depends on residues Arg96, Glu99, and Ser122.

It belongs to the cyanase family.

The enzyme catalyses cyanate + hydrogencarbonate + 3 H(+) = NH4(+) + 2 CO2. Catalyzes the reaction of cyanate with bicarbonate to produce ammonia and carbon dioxide. The sequence is that of Cyanate hydratase from Pseudomonas paraeruginosa (strain DSM 24068 / PA7) (Pseudomonas aeruginosa (strain PA7)).